Here is a 358-residue protein sequence, read N- to C-terminus: MTEADNGVLHTLFHSDQGGHEQVVLCQDRASGLKAVIAIHSTALGPALGGTRFYPYATEEEAVADVLNLSRGMSYKNAMAGLDHGGGKAVIIGDPEQIKSEDLLLAFGRFVASLGGRYVTACDVGTYVADMDVVARECRWTTGRSPENGGAGDSSVLTAFGVFQGMRASAEHLWGDPSLRGRKVGVAGVGKVGHHLVEHLLEDGADVVITDVREESVNRSTHKHPSVTAVADTEALIRTEGLDIYAPCALGGALDDDSVPVLTAKVVCGAANNQLAHPGVEKDLADRSILYAPDYVVNAGGVIQVADELRGFDFDRCKAKASKIFDTTLAIFARAKEDGIPPAAAADRIAEQRMSDAR.

Lys88 is an active-site residue. 188 to 194 (GVGKVGH) contributes to the NAD(+) binding site.

Belongs to the Glu/Leu/Phe/Val dehydrogenases family. Homodimer.

It is found in the cytoplasm. It carries out the reaction L-valine + NAD(+) + H2O = 3-methyl-2-oxobutanoate + NH4(+) + NADH + H(+). It functions in the pathway amino-acid degradation; L-valine degradation. Oxidative deamination of branched-chain amino acids. The catabolism of valine is the major source of fatty acid precursors for macrolide biosynthesis and a vital source of antibiotic precursors. The protein is Valine dehydrogenase (vdh) of Streptomyces virginiae (Streptomyces cinnamonensis).